Here is a 770-residue protein sequence, read N- to C-terminus: Disabled homolog 2 (770 aa).

Polar residues predominate over residues 1–16 (MSNEVETSATNGQPDQ). Residues 1–38 (MSNEVETSATNGQPDQQAAPKAPSKKEKKKGPEKTDEY) are disordered. Serine 2 carries the post-translational modification N-acetylserine. Serine 2 carries the post-translational modification Phosphoserine. One can recognise a PID domain in the interval 45–196 (GDGVKYKAKL…KAVENGSEAL (152 aa)). Residue tyrosine 170 is modified to Phosphotyrosine. The residue at position 193 (serine 193) is a Phosphoserine. The required for localization to clathrin-coated pits stretch occupies residues 230 to 447 (ESKDILLVDL…KPGRGRRTAK (218 aa)). 2 disordered regions span residues 284-482 (LNFF…LQPN) and 604-629 (VSTQ…AGPP). 2 consecutive short sequence motifs (DPF) follow at residues 293–295 (DPF) and 298–300 (DPF). The segment covering 302-313 (QPDQSTPSSFDS) has biased composition (polar residues). Phosphoserine; in mitosis occurs at positions 326 and 328. Residues 366-396 (FSSSQTQPAVRTQNGVSEREQNGFSVKSSPN) show a composition bias toward polar residues. Position 401 is a phosphoserine (serine 401). 3 stretches are compositionally biased toward polar residues: residues 407-425 (SIQN…SSPH), 466-480 (PSGQ…TALQ), and 604-616 (VSTQ…SSLL). The segment at 604-732 (VSTQPPSMHS…SLPVTKSTDN (129 aa)) is sufficient for interaction with GRB2. Residues 619–627 (PPQPPPRAG) form a required for interaction with CSK region. The required for interaction with MYO6 stretch occupies residues 649-770 (KDVKEMFKDF…YRDPFGNPFA (122 aa)). The interval 663-671 (PPAVPARKG) is required for interaction with GRB2 and CSK. 3 positions are modified to phosphoserine: serine 675, serine 723, and serine 729. The segment at 709 to 725 (NKINEPPKPAPRQVSLP) is sufficient for interaction with SH3KBP1 SH3 domain. The tract at residues 742–770 (SFGSSQASVASSQPVSSEMYRDPFGNPFA) is disordered. Residues 745 to 758 (SSQASVASSQPVSS) are compositionally biased toward low complexity.

Interacts (via NPXY motif) with DAB2 (via PID domain). Can interact (via PID domain) with LDLR, APP, APLP1 and APLP2, and weakly with INPP5D (via NPXY motifs); the interaction is impaired by tyrosine phosphorylation of the respective NPXY motifs. Can weakly interact (via PID domain) with LRP1 (via NPXY motif); the interaction is enhanced by tyrosine phosphorylation of the NPXY motif. Interacts with LRP2 (via NPXY motif); the interaction is not affected by tyrosine phosphorylation of the NPXY motif. Interacts with clathrin; in vitro can assemble clathrin triskelia into polyhedral coats. Interacts with AP2A2, ITGB1, ITGB3, ITGB5, PIAS2, DAB2IP, NOSTRIN, FCHO1, DVL3, EPS15, ITSN1 and EPS15L1. Interacts with SH3KBP1 (via SH3 domains). Interacts with GRB2; competes with SOS1 for binding to GRB2 and the interaction is enhanced by EGF and NT-3 stimulation. Interacts with MAP3K7; the interaction is induced by TGF-beta stimulation and may mediate TGF-beta stimulated JNK activation. Interacts with AXIN1 and PPP1CA; the interactions are mutually exclusive. Interacts with the globular tail of MYO6. Interacts (via DPF motifs) with FCHO2; the interaction is direct and required for DAB2-mediated LDLR endocytosis. Interacts with LRP6; the interaction involves LRP6 phosphorylation by CK2 and sequesters LRP6 towards clathrin-mediated endocytosis. Associates with the TGF-beta receptor complex. Interacts with SMAD2 and SMAD3; the interactions are enhanced upon TGF-beta stimulation. Interacts with GRB2; the interaction is enhanced by EGF and NT-3 stimulation. Interacts with SRC; the interaction is enhanced by EGF stimulation. Phosphorylated. Phosphorylation during mitosis is leading to membrane displacement. Expressed in deep invaginations, inclusion cysts and the surface epithelial cells of the ovary. Also expressed in breast epithelial cells, spleen, thymus, prostate, testis, macrophages, fibroblasts, lung epithelial cells, placenta, brain stem, heart and small intestine. Expressed in kidney proximal tubular epithelial cells (at protein level).

The protein localises to the cytoplasm. The protein resides in the cytoplasmic vesicle. It localises to the clathrin-coated vesicle membrane. Its subcellular location is the membrane. It is found in the clathrin-coated pit. Its function is as follows. Adapter protein that functions as a clathrin-associated sorting protein (CLASP) required for clathrin-mediated endocytosis of selected cargo proteins. Can bind and assemble clathrin, and binds simultaneously to phosphatidylinositol 4,5-bisphosphate (PtdIns(4,5)P2) and cargos containing non-phosphorylated NPXY internalization motifs, such as the LDL receptor, to recruit them to clathrin-coated pits. Can function in clathrin-mediated endocytosis independently of the AP-2 complex. Involved in endocytosis of integrin beta-1; this function seems to redundant with the AP-2 complex and seems to require DAB2 binding to endocytosis accessory EH domain-containing proteins such as EPS15, EPS15L1 and ITSN1. Involved in endocytosis of cystic fibrosis transmembrane conductance regulator/CFTR. Involved in endocytosis of megalin/LRP2 lipoprotein receptor during embryonal development. Required for recycling of the TGF-beta receptor. Involved in CFTR trafficking to the late endosome. Involved in several receptor-mediated signaling pathways. Involved in TGF-beta receptor signaling and facilitates phosphorylation of the signal transducer SMAD2. Mediates TFG-beta-stimulated JNK activation. May inhibit the canoniocal Wnt/beta-catenin signaling pathway by stabilizing the beta-catenin destruction complex through a competing association with axin preventing its dephosphorylation through protein phosphatase 1 (PP1). Sequesters LRP6 towards clathrin-mediated endocytosis, leading to inhibition of Wnt/beta-catenin signaling. May activate non-canonical Wnt signaling. In cell surface growth factor/Ras signaling pathways proposed to inhibit ERK activation by interrupting the binding of GRB2 to SOS1 and to inhibit SRC by preventing its activating phosphorylation at 'Tyr-419'. Proposed to be involved in modulation of androgen receptor (AR) signaling mediated by SRC activation; seems to compete with AR for interaction with SRC. Plays a role in the CSF-1 signal transduction pathway. Plays a role in cellular differentiation. Involved in cell positioning and formation of visceral endoderm (VE) during embryogenesis and proposed to be required in the VE to respond to Nodal signaling coming from the epiblast. Required for the epithelial to mesenchymal transition, a process necessary for proper embryonic development. May be involved in myeloid cell differentiation and can induce macrophage adhesion and spreading. May act as a tumor suppressor. This is Disabled homolog 2 (DAB2) from Homo sapiens (Human).